The following is a 681-amino-acid chain: Transferrin (681 aa).

Residues 1 to 18 (MALKLLTLIALTCAAANA) form the signal peptide. 2 Transferrin-like domains span residues 23-364 (YKLC…ERGH) and 371-676 (VRLC…DVIS). 2 cysteine pairs are disulfide-bonded: C26-C60 and C35-C51. 2 residues coordinate Fe(3+): D75 and Y108. 4 disulfides stabilise this stretch: C132-C228, C181-C207, C204-C213, and C271-C284. Hydrogencarbonate is bound by residues T134, R138, V140, and G141. A glycan (N-linked (GlcNAc...) asparagine) is linked at N218. Y222 contacts Fe(3+). N355 carries N-linked (GlcNAc...) asparagine glycosylation. 2 cysteine pairs are disulfide-bonded: C374/C411 and C384/C402. An N-linked (GlcNAc...) asparagine glycan is attached at N418. Intrachain disulfides connect C478–C551, C506–C678, and C579–C596.

Belongs to the transferrin family.

It localises to the secreted. In terms of biological role, transferrins are iron binding transport proteins which bind Fe(3+) ion in association with the binding of an anion, usually bicarbonate. This transferrin binds only one Fe(3+) ion per protein molecule. In Manduca sexta (Tobacco hawkmoth), this protein is Transferrin.